A 98-amino-acid polypeptide reads, in one-letter code: NADH-ubiquinone oxidoreductase chain 4L (98 aa).

Helical transmembrane passes span 1–21, 29–49, and 61–81; these read MSMVYINIFLAFTMSLMGLLM, SLLCLEGMMLSLFIMMAVAIL, and IILLVFAACEAALGLSLLVMV.

This sequence belongs to the complex I subunit 4L family. As to quaternary structure, core subunit of respiratory chain NADH dehydrogenase (Complex I) which is composed of 45 different subunits.

It localises to the mitochondrion inner membrane. The enzyme catalyses a ubiquinone + NADH + 5 H(+)(in) = a ubiquinol + NAD(+) + 4 H(+)(out). Its function is as follows. Core subunit of the mitochondrial membrane respiratory chain NADH dehydrogenase (Complex I) which catalyzes electron transfer from NADH through the respiratory chain, using ubiquinone as an electron acceptor. Part of the enzyme membrane arm which is embedded in the lipid bilayer and involved in proton translocation. In Puma concolor (Mountain lion), this protein is NADH-ubiquinone oxidoreductase chain 4L (MT-ND4L).